The sequence spans 321 residues: Sex-lethal homolog (321 aa).

2 RRM domains span residues 78–156 (TNLI…FARP) and 164–244 (TNLY…VAEE).

Expressed in gonads and somatic tissues of both sexes. In the ovary, expressed in the last egg chamber of each ovariole. Highly expressed in nurse cells with low expression found in oocytes. Highly expressed in testis with lower expression in testis sheath and vas deferentia.

It localises to the nucleus. Functionally, unknown; apparently not involved in somatic sex determination. The sequence is that of Sex-lethal homolog (SXL) from Megaselia scalaris (Humpbacked fly).